Here is a 160-residue protein sequence, read N- to C-terminus: Arginine repressor (160 aa).

This sequence belongs to the ArgR family.

Its subcellular location is the cytoplasm. The protein operates within amino-acid biosynthesis; L-arginine biosynthesis [regulation]. Regulates arginine biosynthesis genes. The protein is Arginine repressor of Anaeromyxobacter dehalogenans (strain 2CP-1 / ATCC BAA-258).